Consider the following 454-residue polypeptide: Trigger factor (454 aa).

One can recognise a PPIase FKBP-type domain in the interval 169-261 (GDVAIADYEG…LKELKSRELP (93 aa)).

This sequence belongs to the FKBP-type PPIase family. Tig subfamily.

It localises to the cytoplasm. It catalyses the reaction [protein]-peptidylproline (omega=180) = [protein]-peptidylproline (omega=0). In terms of biological role, involved in protein export. Acts as a chaperone by maintaining the newly synthesized protein in an open conformation. Functions as a peptidyl-prolyl cis-trans isomerase. This is Trigger factor from Picosynechococcus sp. (strain ATCC 27264 / PCC 7002 / PR-6) (Agmenellum quadruplicatum).